A 208-amino-acid chain; its full sequence is Uracil phosphoribosyltransferase (208 aa).

5-phospho-alpha-D-ribose 1-diphosphate contacts are provided by residues R78, R103, and 130 to 138 (DPMLATGVS). Uracil contacts are provided by residues I193 and 198–200 (GDA). Residue D199 participates in 5-phospho-alpha-D-ribose 1-diphosphate binding.

The protein belongs to the UPRTase family. It depends on Mg(2+) as a cofactor.

It catalyses the reaction UMP + diphosphate = 5-phospho-alpha-D-ribose 1-diphosphate + uracil. The protein operates within pyrimidine metabolism; UMP biosynthesis via salvage pathway; UMP from uracil: step 1/1. Allosterically activated by GTP. In terms of biological role, catalyzes the conversion of uracil and 5-phospho-alpha-D-ribose 1-diphosphate (PRPP) to UMP and diphosphate. The polypeptide is Uracil phosphoribosyltransferase (Thermosipho melanesiensis (strain DSM 12029 / CIP 104789 / BI429)).